The primary structure comprises 25 residues: LASP1 neighbor protein (25 aa).

Residues 4–24 (IFILMFFAIIGLVILSYIIYL) traverse the membrane as a helical segment.

The protein resides in the membrane. May play a key role in the skin fibroblasts (FBs)-keratinocyte-like cells (KLCs). The chain is LASP1 neighbor protein from Homo sapiens (Human).